Here is a 611-residue protein sequence, read N- to C-terminus: Cilia- and flagella-associated protein 100 (611 aa).

Polar residues predominate over residues 1 to 17; that stretch reads MSEIPSTIVSKNMTNDK. The segment at 1–57 is disordered; it reads MSEIPSTIVSKNMTNDKNSLESMNISSSSSTEENPKKQARKNEEHGPDPSANPFHLS. A compositionally biased stretch (low complexity) spans 20-32; it reads LESMNISSSSSTE. Over residues 33–47 the composition is skewed to basic and acidic residues; sequence ENPKKQARKNEEHGP. Coiled-coil stretches lie at residues 101–128, 164–203, and 230–257; these read SLRR…RAFR, ALDV…FDEF, and LEIR…KHYK. Disordered stretches follow at residues 287–323 and 338–380; these read EVSE…GQGT and SPSY…GEEP. Over residues 338 to 357 the composition is skewed to low complexity; sequence SPSYLSSPQQGSQPSESSGG. 2 coiled-coil regions span residues 393-432 and 526-578; these read VFRE…MDRE and QVKI…RGRT.

It belongs to the CFAP100 family.

It is found in the cytoplasm. The protein localises to the cytoskeleton. Its subcellular location is the cilium axoneme. Its function is as follows. May play a role in ciliary/flagellar motility by regulating the assembly and the activity of axonemal inner dynein arm. This Homo sapiens (Human) protein is Cilia- and flagella-associated protein 100.